Here is a 125-residue protein sequence, read N- to C-terminus: Ribonuclease P protein component (125 aa).

The protein belongs to the RnpA family. In terms of assembly, consists of a catalytic RNA component (M1 or rnpB) and a protein subunit.

It catalyses the reaction Endonucleolytic cleavage of RNA, removing 5'-extranucleotides from tRNA precursor.. Its function is as follows. RNaseP catalyzes the removal of the 5'-leader sequence from pre-tRNA to produce the mature 5'-terminus. It can also cleave other RNA substrates such as 4.5S RNA. The protein component plays an auxiliary but essential role in vivo by binding to the 5'-leader sequence and broadening the substrate specificity of the ribozyme. This chain is Ribonuclease P protein component, found in Clostridium botulinum (strain Eklund 17B / Type B).